The chain runs to 187 residues: UPF0301 protein PC1_3712 (187 aa).

This sequence belongs to the UPF0301 (AlgH) family.

In Pectobacterium carotovorum subsp. carotovorum (strain PC1), this protein is UPF0301 protein PC1_3712.